The primary structure comprises 73 residues: Large ribosomal subunit protein bL31 (73 aa).

The protein belongs to the bacterial ribosomal protein bL31 family. Type A subfamily. Part of the 50S ribosomal subunit.

Functionally, binds the 23S rRNA. This chain is Large ribosomal subunit protein bL31, found in Allorhizobium ampelinum (strain ATCC BAA-846 / DSM 112012 / S4) (Agrobacterium vitis (strain S4)).